A 311-amino-acid chain; its full sequence is Very-long-chain 3-oxoacyl-CoA reductase-B (311 aa).

The chain crosses the membrane as a helical span at residues 8 to 28 (LFWVGAVTVLWLSVSSLWSLI). 48–77 (GKWAVVTGATDGIGKAYAEELARRGFAIVL) contributes to the NADP(+) binding site. Residues 125-145 (IGVLVNNVGVSYSYPEFFLNI) form a helical membrane-spanning segment. A substrate-binding site is contributed by Ser187. Catalysis depends on Tyr200, which acts as the Proton acceptor. A helical membrane pass occupies residues 269–289 (GYLPHAIMGWVTASLLPAKLL).

Belongs to the short-chain dehydrogenases/reductases (SDR) family. 17-beta-HSD 3 subfamily.

It is found in the endoplasmic reticulum membrane. It catalyses the reaction a very-long-chain (3R)-3-hydroxyacyl-CoA + NADP(+) = a very-long-chain 3-oxoacyl-CoA + NADPH + H(+). It carries out the reaction 17beta-estradiol + NAD(+) = estrone + NADH + H(+). The catalysed reaction is 17beta-estradiol + NADP(+) = estrone + NADPH + H(+). Its pathway is lipid metabolism; fatty acid biosynthesis. It functions in the pathway steroid biosynthesis; estrogen biosynthesis. Catalyzes the second of the four reactions of the long-chain fatty acids elongation cycle. This endoplasmic reticulum-bound enzymatic process, allows the addition of two carbons to the chain of long- and very long-chain fatty acids/VLCFAs per cycle. This enzyme has a 3-ketoacyl-CoA reductase activity, reducing 3-ketoacyl-CoA to 3-hydroxyacyl-CoA, within each cycle of fatty acid elongation. Thereby, it may participate in the production of VLCFAs of different chain lengths that are involved in multiple biological processes as precursors of membrane lipids and lipid mediators. May also catalyze the transformation of estrone (E1) into estradiol (E2) and play a role in estrogen formation. This chain is Very-long-chain 3-oxoacyl-CoA reductase-B (hsd17b12b), found in Danio rerio (Zebrafish).